The primary structure comprises 219 residues: Swarming motility regulation protein RssB (219 aa).

A Response regulatory domain is found at 2 to 116; that stretch reads NILLVEDDLQ…ELISRVKAVN (115 aa). A 4-aspartylphosphate modification is found at D51. Positions 124–218 form a DNA-binding region, ompR/PhoB-type; the sequence is SQTWSLGALY…VRGIGYLLKK (95 aa).

The protein resides in the cytoplasm. Functionally, member of the two-component regulatory system RssA/RssB involved in regulation of swarming motility which has been shown to be inhibited by saturated fatty acids. RssA/RssB regulates cellular fatty acid composition, hemolysin production and cell surface topography. RssA/RssB negatively regulates the activity of SlhBA. It can also act as a negative regulator for the control of the swarming initiation. RssB binds its own promoter. The chain is Swarming motility regulation protein RssB (rssB) from Serratia marcescens.